The following is a 60-amino-acid chain: Truncated protein A35 homolog (60 aa).

It belongs to the chordopoxvirinae A35 protein family.

The chain is Truncated protein A35 homolog (A38R) from Variola virus (isolate Human/India/Ind3/1967) (VARV).